The chain runs to 448 residues: tRNA wybutosine-synthesizing protein 2 homolog (448 aa).

S-adenosyl-L-methionine-binding positions include S218, K225, E265, and 293–294; that span reads DN.

Belongs to the class I-like SAM-binding methyltransferase superfamily. TRM5/TYW2 family.

It catalyses the reaction 4-demethylwyosine(37) in tRNA(Phe) + S-adenosyl-L-methionine = 4-demethyl-7-[(3S)-3-amino-3-carboxypropyl]wyosine(37) in tRNA(Phe) + S-methyl-5'-thioadenosine + H(+). The protein operates within tRNA modification; wybutosine-tRNA(Phe) biosynthesis. Its function is as follows. S-adenosyl-L-methionine-dependent transferase that acts as a component of the wybutosine biosynthesis pathway. Wybutosine is a hyper modified guanosine with a tricyclic base found at the 3'-position adjacent to the anticodon of eukaryotic phenylalanine tRNA. Catalyzes the transfer of the alpha-amino-alpha-carboxypropyl (acp) group from S-adenosyl-L-methionine to the C-7 position of 4-demethylwyosine (imG-14) to produce wybutosine-86. This Homo sapiens (Human) protein is tRNA wybutosine-synthesizing protein 2 homolog (TRMT12).